We begin with the raw amino-acid sequence, 304 residues long: GMP synthase [glutamine-hydrolyzing] subunit B (304 aa).

One can recognise a GMPS ATP-PPase domain in the interval 2–183; that stretch reads VKVEKFIPNA…LDLPEEICER (182 aa). Residue 28 to 34 coordinates ATP; it reads SGGVDSS.

In terms of assembly, heterodimer composed of a glutamine amidotransferase subunit (A) and a GMP-binding subunit (B).

It catalyses the reaction XMP + L-glutamine + ATP + H2O = GMP + L-glutamate + AMP + diphosphate + 2 H(+). Its pathway is purine metabolism; GMP biosynthesis; GMP from XMP (L-Gln route): step 1/1. Catalyzes the synthesis of GMP from XMP. In Methanococcoides burtonii (strain DSM 6242 / NBRC 107633 / OCM 468 / ACE-M), this protein is GMP synthase [glutamine-hydrolyzing] subunit B.